Here is an 806-residue protein sequence, read N- to C-terminus: 85/88 kDa calcium-independent phospholipase A2 (806 aa).

ANK repeat units lie at residues 120–147 (WSVAHLAVELGIRECFHHSRIISCANCA), 151–181 (EGCTPLHLACRKGDGEILVELVQYCHTQMDV), 185–215 (KGETVFHYAVQGDNSQVLQLLGRNAVAGLNQ), 219–248 (QGLTPLHLACQLGKQEMVRVLLLCNARCNI), 251–281 (PNGYPIHSAMKFSQKGCAEMIISMDSSQIHS), 286–312 (YGASPLHWAKNAEMARMLLKRGCNVNS), 316–345 (AGNTALHVAVMRNRFDCAIVLLTHGANADA), 349–378 (HGNTPLHLAMSKDNVEMIKALIVFGAEVDT), and 382–403 (FGETPTFLASKIGRLVTRKAIL). Helical transmembrane passes span 480–500 (LLCLDGGGVKGLIIIQLLIAI) and 511–531 (LFDWVAGTSTGGILALAILHS). Residues 481-665 (LCLDGGGVKG…LANNPTLDAM (185 aa)) enclose the PNPLA domain. The short motif at 485 to 490 (GGGVKG) is the GXGXXG element. The short motif at 517 to 521 (GTSTG) is the GXSXG element. The active-site Nucleophile is the S519. The active-site Proton acceptor is the D652. The DGA/G motif lies at 652 to 654 (DGG). Positions 677–686 (RKGQANKVKK) are calmodulin-binding (1-9-14 motif). The segment at 748–759 (AWCEMVGIQYFR) is calmodulin-binding (IQ motif).

In terms of assembly, homodimer formed by catalytic domains tightly interacting through a large hydrophobic interface. The contact area involves 3 alpha helices, several loops and a part of the beta sheet from each monomer. Both active sites of the dimer are in close proximity adopting an open conformation that provide sufficient space for phospholipid access and favoring cooperativity in deacylation-reacylation reactions. Each monomer has 9 ankyrin repeats stacked side-by-side in an elongated structure oriented outwards from the catalytic core. In terms of tissue distribution, four different transcripts were found to be expressed in a distinct tissue distribution.

The protein localises to the cytoplasm. The protein resides in the cell membrane. It localises to the mitochondrion. It is found in the cell projection. Its subcellular location is the pseudopodium. It carries out the reaction a 1,2-diacyl-sn-glycero-3-phosphocholine + H2O = a 1-acyl-sn-glycero-3-phosphocholine + a fatty acid + H(+). It catalyses the reaction a 1-O-alkyl-2-acyl-sn-glycero-3-phosphocholine + H2O = a 1-O-alkyl-sn-glycero-3-phosphocholine + a fatty acid + H(+). The catalysed reaction is 1,2-dihexadecanoyl-sn-glycero-3-phosphocholine + H2O = 1-hexadecanoyl-sn-glycero-3-phosphocholine + hexadecanoate + H(+). The enzyme catalyses 1-hexadecanoyl-2-(9Z-octadecenoyl)-sn-glycero-3-phosphocholine + H2O = 1-hexadecanoyl-sn-glycero-3-phosphocholine + (9Z)-octadecenoate + H(+). It carries out the reaction 1-hexadecanoyl-2-(9Z,12Z-octadecadienoyl)-sn-glycero-3-phosphocholine + H2O = (9Z,12Z)-octadecadienoate + 1-hexadecanoyl-sn-glycero-3-phosphocholine + H(+). It catalyses the reaction 1-hexadecanoyl-2-(5Z,8Z,11Z,14Z-eicosatetraenoyl)-sn-glycero-3-phosphocholine + H2O = 1-hexadecanoyl-sn-glycero-3-phosphocholine + (5Z,8Z,11Z,14Z)-eicosatetraenoate + H(+). The catalysed reaction is 1-octadecanoyl-2-(5Z,8Z,11Z,14Z-eicosatetraenoyl)-sn-glycero-3-phosphocholine + H2O = 1-octadecanoyl-sn-glycero-3-phosphocholine + (5Z,8Z,11Z,14Z)-eicosatetraenoate + H(+). The enzyme catalyses 1-hexadecanoyl-2-(5Z,8Z,11Z,14Z-eicosatetraenoyl)-sn-glycero-3-phosphoethanolamine + H2O = 1-hexadecanoyl-sn-glycero-3-phosphoethanolamine + (5Z,8Z,11Z,14Z)-eicosatetraenoate + H(+). It carries out the reaction 1,2-dihexadecanoyl-sn-glycero-3-phosphate + H2O = 1-hexadecanoyl-sn-glycero-3-phosphate + hexadecanoate + H(+). It catalyses the reaction a 1-acyl-sn-glycero-3-phosphocholine + H2O = sn-glycerol 3-phosphocholine + a fatty acid + H(+). The catalysed reaction is 1-hexadecanoyl-sn-glycero-3-phosphocholine + H2O = sn-glycerol 3-phosphocholine + hexadecanoate + H(+). The enzyme catalyses 1-(5Z,8Z,11Z,14Z-eicosatetraenoyl)-sn-glycero-3-phosphocholine + H2O = sn-glycerol 3-phosphocholine + (5Z,8Z,11Z,14Z)-eicosatetraenoate + H(+). It carries out the reaction 2-(5Z,8Z,11Z,14Z)-eicosatetraenoyl-sn-glycero-3-phosphocholine + H2O = sn-glycerol 3-phosphocholine + (5Z,8Z,11Z,14Z)-eicosatetraenoate + H(+). It catalyses the reaction 1-O-hexadecyl-2-(5Z,8Z,11Z,14Z)-eicosatetraenoyl-sn-glycero-3-phosphocholine + H2O = 1-O-hexadecyl-sn-glycero-3-phosphocholine + (5Z,8Z,11Z,14Z)-eicosatetraenoate + H(+). The catalysed reaction is 1-O-hexadecyl-2-acetyl-sn-glycero-3-phosphocholine + H2O = 1-O-hexadecyl-sn-glycero-3-phosphocholine + acetate + H(+). The enzyme catalyses hexadecanoyl-CoA + H2O = hexadecanoate + CoA + H(+). It carries out the reaction 1',3'-bis[1,2-di-(9Z-octadecenoyl)-sn-glycero-3-phospho]-glycerol + H2O = 1'-[1,2-di-(9Z-octadecenoyl)-sn-glycero-3-phospho]-3'-[1-(9Z-octadecenoyl)-sn-glycero-3-phospho]-glycerol + (9Z)-octadecenoate + H(+). It catalyses the reaction 1'-[1,2-di-(9Z-octadecenoyl)-sn-glycero-3-phospho]-3'-[1-(9Z-octadecenoyl)-sn-glycero-3-phospho]-glycerol + H2O = 1',3'-bis-[1-(9Z-octadecenoyl)-sn-glycero-3-phospho]-glycerol + (9Z)-octadecenoate + H(+). The catalysed reaction is 1',3'-bis-[1,2-di-(9Z,12Z-octadecadienoyl)-sn-glycero-3-phospho]-glycerol + H2O = 1'-[1,2-di-(9Z,12Z-octadecadienoyl)-sn-glycero-3-phospho]-3'-[1-(9Z,12Z-octadecadienoyl)-sn-glycero-3-phospho]-glycerol + (9Z,12Z)-octadecadienoate + H(+). The enzyme catalyses 1-octadecanoyl-2-(15-hydroxy-(5Z,8Z,11Z,13E)-eicosatetraenoyl)-sn-glycero-3-phosphoethanolamine + H2O = 1-octadecanoyl-sn-glycero-3-phosphoethanolamine + 15-hydroxy-(5Z,8Z,11Z,13E)-eicosatetraenoate + H(+). Its activity is regulated as follows. Activated by ATP. Inhibited by calcium-activated calmodulin. Inhibited by bromoenol lactone (BEL). Calcium-independent phospholipase involved in phospholipid remodeling with implications in cellular membrane homeostasis, mitochondrial integrity and signal transduction. Hydrolyzes the ester bond of the fatty acyl group attached at sn-1 or sn-2 position of phospholipids (phospholipase A1 and A2 activity respectively), producing lysophospholipids that are used in deacylation-reacylation cycles. Hydrolyzes both saturated and unsaturated long fatty acyl chains in various glycerophospholipid classes such as phosphatidylcholines, phosphatidylethanolamines and phosphatidates, with a preference for hydrolysis at sn-2 position. Can further hydrolyze lysophospholipids carrying saturated fatty acyl chains (lysophospholipase activity). Upon oxidative stress, contributes to remodeling of mitochondrial phospholipids in pancreatic beta cells, in a repair mechanism to reduce oxidized lipid content. Preferentially hydrolyzes oxidized polyunsaturated fatty acyl chains from cardiolipins, yielding monolysocardiolipins that can be reacylated with unoxidized fatty acyls to regenerate native cardiolipin species. Hydrolyzes oxidized glycerophosphoethanolamines present in pancreatic islets, releasing oxidized polyunsaturated fatty acids such as hydroxyeicosatetraenoates (HETEs). Has thioesterase activity toward fatty-acyl CoA releasing CoA-SH known to facilitate fatty acid transport and beta-oxidation in mitochondria particularly in skeletal muscle. Plays a role in regulation of membrane dynamics and homeostasis. Selectively hydrolyzes sn-2 arachidonoyl group in plasmalogen phospholipids, structural components of lipid rafts and myelin. Regulates F-actin polymerization at the pseudopods, which is required for both speed and directionality of MCP1/CCL2-induced monocyte chemotaxis. Targets membrane phospholipids to produce potent lipid signaling messengers. Generates lysophosphatidate (LPA, 1-acyl-glycerol-3-phosphate), which acts via G-protein receptors in various cell types. Has phospholipase A2 activity toward platelet-activating factor (PAF, 1-O-alkyl-2-acetyl-sn-glycero-3-phosphocholine), likely playing a role in inactivation of this potent pro-inflammatory signaling lipid. In response to glucose, amplifies calcium influx in pancreatic beta cells to promote INS secretion. Functionally, lacks the catalytic domain and may act as a negative regulator of the catalytically active isoforms. The chain is 85/88 kDa calcium-independent phospholipase A2 (PLA2G6) from Homo sapiens (Human).